The primary structure comprises 424 residues: Serine--tRNA ligase (424 aa).

Thr231 to Glu233 lines the L-serine pocket. Arg262–Glu264 lines the ATP pocket. Glu285 serves as a coordination point for L-serine. ATP is bound at residue Glu349–Ser352. Ser385 contacts L-serine.

Belongs to the class-II aminoacyl-tRNA synthetase family. Type-1 seryl-tRNA synthetase subfamily. Homodimer. The tRNA molecule binds across the dimer.

The protein resides in the cytoplasm. It carries out the reaction tRNA(Ser) + L-serine + ATP = L-seryl-tRNA(Ser) + AMP + diphosphate + H(+). The catalysed reaction is tRNA(Sec) + L-serine + ATP = L-seryl-tRNA(Sec) + AMP + diphosphate + H(+). Its pathway is aminoacyl-tRNA biosynthesis; selenocysteinyl-tRNA(Sec) biosynthesis; L-seryl-tRNA(Sec) from L-serine and tRNA(Sec): step 1/1. In terms of biological role, catalyzes the attachment of serine to tRNA(Ser). Is also able to aminoacylate tRNA(Sec) with serine, to form the misacylated tRNA L-seryl-tRNA(Sec), which will be further converted into selenocysteinyl-tRNA(Sec). The chain is Serine--tRNA ligase from Bacillus cereus (strain G9842).